The following is a 478-amino-acid chain: Cysteine protease ATG4B (478 aa).

A compositionally biased stretch (polar residues) spans 1–15 (MTSLPDRGVSSSSSD). A disordered region spans residues 1 to 31 (MTSLPDRGVSSSSSDPLCEGNIAPCSSSSEQ). The active-site Nucleophile is Cys-164. Active-site residues include Asp-361 and His-363.

It belongs to the peptidase C54 family. As to quaternary structure, interacts with ATG8.

It is found in the cytoplasm. It catalyses the reaction [protein]-C-terminal L-amino acid-glycyl-phosphatidylethanolamide + H2O = [protein]-C-terminal L-amino acid-glycine + a 1,2-diacyl-sn-glycero-3-phosphoethanolamine. Cysteine protease that plays a key role in autophagy by mediating both proteolytic activation and delipidation of ATG8 family proteins. The protease activity is required for proteolytic activation of ATG8 family proteins: cleaves the C-terminal amino acid of ATG8 proteins to reveal a C-terminal glycine. Exposure of the glycine at the C-terminus is essential for ATG8 proteins conjugation to phosphatidylethanolamine (PE) and insertion to membranes, which is necessary for autophagy. In addition to the protease activity, also mediates delipidation of PE-conjugated ATG8 proteins. The protein is Cysteine protease ATG4B (ATG4B) of Oryza sativa subsp. japonica (Rice).